Here is a 474-residue protein sequence, read N- to C-terminus: MLRNTHLVLPFILYLLFRLSHFLLEVPTVRMIELAACHQHLRLDHGPLNEAACKTPPVQEHVSLVVGWKMTFDSIPGLMSILYFGTLADKSGHRAILRLCCVGYLLAILWVLITCLFHQVFPVELVLLSSLFLFIGGGQLVFAAVITAFVADLFPPPSRTKFLFLLAAMPHMDKVASPALATKLMEQNLFLPSLVSMAIVVICVALLQMSDVGRETAASKVVGSTSDQTEPFLRSSSNSSQESGTAAPAIDPEQARGPFRQLKNIICWVHREPVLFICYLCFFLKSNAMASEAFIFQYLSEKFGWPLRETTVMRLALSSGAVISTLIICPLANATLHNRGVASARINIGAVHASSIVLVASFIMAWQASSSTAFIFSMLAAGFGEGLEPALQGVLAAASQTKAKGSIFALMCTCSLLGDMTGGPLMSALMSIGRGGNGVSDGYCFLASALVFGAVIVLAHLLWALGAEEMLGED.

6 helical membrane-spanning segments follow: residues 7-27 (LVLP…LEVP), 64-84 (LVVG…ILYF), 101-121 (CVGY…HQVF), 131-151 (LFLF…AFVA), 162-182 (FLFL…ALAT), and 189-209 (LFLP…LLQM). Residues 220–252 (KVVGSTSDQTEPFLRSSSNSSQESGTAAPAIDP) are disordered. A compositionally biased stretch (polar residues) spans 222–244 (VGSTSDQTEPFLRSSSNSSQESG). N238 is a glycosylation site (N-linked (GlcNAc...) asparagine). Transmembrane regions (helical) follow at residues 276–296 (FICY…AFIF), 315–335 (LALS…ANAT), 346–366 (INIG…IMAW), 374–394 (FIFS…LQGV), 406–426 (SIFA…GPLM), and 445–465 (FLAS…LWAL).

The protein belongs to the major facilitator superfamily.

The protein resides in the cell membrane. Functionally, MFS transporter; part of the satratoxin SC3 cluster involved in the biosynthesis of satratoxins, trichothecene mycotoxins that are associated with human food poisonings. Satratoxins are suggested to be made by products of multiple gene clusters (SC1, SC2 and SC3) that encode 21 proteins in all, including polyketide synthases, acetyltransferases, and other enzymes expected to modify the trichothecene skeleton. SC1 encodes 10 proteins, SAT1 to SAT10. The largest are SAT8, which encodes a putative polyketide synthase (PKS) with a conventional non-reducing architecture, and SAT10, a putative protein containing four ankyrin repeats and thus may be involved in protein scaffolding. The putative short-chain reductase SAT3 may assist the PKS in some capacity. SAT6 contains a secretory lipase domain and acts probably as a trichothecene esterase. SAT5 encodes a putative acetyltransferase, and so, with SAT6, may affect endogenous protection from toxicity. The probable transcription factor SAT9 may regulate the expression of the SC1 cluster. SC2 encodes proteins SAT11 to SAT16, the largest of which encodes the putative reducing PKS SAT13. SAT11 is a cytochrome P450 monooxygenase, while SAT14 and SAT16 are probable acetyltransferases. The SC2 cluster may be regulated by the transcription factor SAT15. SC3 is a small cluster that encodes 5 proteins, SAT17 to SAT21. SAT21 is a putative MFS-type transporter which may have a role in exporting secondary metabolites. The four other proteins putatively encoded in SC3 include the taurine hydroxylase-like protein SAT17, the O-methyltransferase SAT18, the acetyltransferase SAT19, and the Cys6-type zinc finger SAT20, the latter being probably involved in regulation of SC3 expression. The protein is MFS transporter SAT21 of Stachybotrys chartarum (strain CBS 109288 / IBT 7711) (Toxic black mold).